The sequence spans 901 residues: Protein translocase subunit SecA (901 aa).

ATP-binding positions include Gln87, 105–109, and Asp512; that span reads GEGKT. Zn(2+)-binding residues include Cys885, Cys887, Cys896, and His897.

The protein belongs to the SecA family. Monomer and homodimer. Part of the essential Sec protein translocation apparatus which comprises SecA, SecYEG and auxiliary proteins SecDF-YajC and YidC. Requires Zn(2+) as cofactor.

It localises to the cell inner membrane. It is found in the cytoplasm. It catalyses the reaction ATP + H2O + cellular proteinSide 1 = ADP + phosphate + cellular proteinSide 2.. Part of the Sec protein translocase complex. Interacts with the SecYEG preprotein conducting channel. Has a central role in coupling the hydrolysis of ATP to the transfer of proteins into and across the cell membrane, serving both as a receptor for the preprotein-SecB complex and as an ATP-driven molecular motor driving the stepwise translocation of polypeptide chains across the membrane. The polypeptide is Protein translocase subunit SecA (Salmonella agona (strain SL483)).